A 498-amino-acid polypeptide reads, in one-letter code: ATP synthase subunit beta, chloroplastic (498 aa).

172–179 (GGAGVGKT) lines the ATP pocket.

The protein belongs to the ATPase alpha/beta chains family. F-type ATPases have 2 components, CF(1) - the catalytic core - and CF(0) - the membrane proton channel. CF(1) has five subunits: alpha(3), beta(3), gamma(1), delta(1), epsilon(1). CF(0) has four main subunits: a(1), b(1), b'(1) and c(9-12).

It is found in the plastid. It localises to the chloroplast thylakoid membrane. It catalyses the reaction ATP + H2O + 4 H(+)(in) = ADP + phosphate + 5 H(+)(out). In terms of biological role, produces ATP from ADP in the presence of a proton gradient across the membrane. The catalytic sites are hosted primarily by the beta subunits. This Populus alba (White poplar) protein is ATP synthase subunit beta, chloroplastic.